Consider the following 462-residue polypeptide: Phosphoglucosamine mutase (462 aa).

Ser-111 serves as the catalytic Phosphoserine intermediate. Mg(2+) contacts are provided by Ser-111, Asp-250, Asp-252, and Asp-254. Ser-111 is subject to Phosphoserine.

Belongs to the phosphohexose mutase family. Requires Mg(2+) as cofactor. Activated by phosphorylation.

The enzyme catalyses alpha-D-glucosamine 1-phosphate = D-glucosamine 6-phosphate. In terms of biological role, catalyzes the conversion of glucosamine-6-phosphate to glucosamine-1-phosphate. The polypeptide is Phosphoglucosamine mutase (Synechococcus sp. (strain WH7803)).